The chain runs to 801 residues: Na(+)/H(+) antiporter subunit A1 (801 aa).

Transmembrane regions (helical) follow at residues 1-21 (MSLLHIAVILPLIFALIIPIL), 28-48 (IHLGWFVLPVPIVIFIYMLTL), 79-99 (LGLLFSLLISGIGSLVVLYSI), 117-137 (LFMGAMLGVVLSDNVIILYLF), 166-186 (LIITVFGGLSLLGGIILLAIP), 206-226 (PFFIFAMILIMIGAFTKSAQF), 265-285 (IFAASQGWVWTVTLVGLITLF), 300-320 (ILAFSTVSQLGMIMAMLGIGA), 337-357 (FTAAIFHLINHATFKGALFMI), 373-393 (LGGLLTIMPISFTITVITALS), 427-447 (LGYLFPIIGIVGSVFTFVYSI), 472-492 (ILMLLSPAILATLVIVLGLFP), 522-542 (GLTPAFLSTLVIYILGILLIV), 591-611 (LVIIFGALILLTFVTIFSVPF), 623-643 (IFEVCIVILLLSAAFLILFAK), 646-666 (LFSIIMLSAVGYAVSVLFIFF), 671-691 (LALTQFVVESISTALFLLCFY), 707-727 (LTNALIAGGVGLSVIIIGLIA), and 764-784 (MDTLFESSVLGIAGLAVYTMI).

Belongs to the CPA3 antiporters (TC 2.A.63) subunit A family. As to quaternary structure, may form a heterooligomeric complex that consists of seven subunits: mnhA1, mnhB1, mnhC1, mnhD1, mnhE1, mnhF1 and mnhG1.

It localises to the cell membrane. Mnh complex is a Na(+)/H(+) antiporter involved in Na(+) excretion. This chain is Na(+)/H(+) antiporter subunit A1 (mnhA1), found in Staphylococcus aureus (strain Mu3 / ATCC 700698).